The chain runs to 290 residues: Nitrogenase iron protein 2 (290 aa).

10 to 17 (GKGGIGKS) lines the ATP pocket. [4Fe-4S] cluster is bound at residue Cys98. Arg101 carries the post-translational modification ADP-ribosylarginine; by dinitrogenase reductase ADP-ribosyltransferase. A [4Fe-4S] cluster-binding site is contributed by Cys133.

The protein belongs to the NifH/BchL/ChlL family. In terms of assembly, homodimer. It depends on [4Fe-4S] cluster as a cofactor. The reversible ADP-ribosylation of Arg-101 inactivates the nitrogenase reductase and regulates nitrogenase activity.

It carries out the reaction N2 + 8 reduced [2Fe-2S]-[ferredoxin] + 16 ATP + 16 H2O = H2 + 8 oxidized [2Fe-2S]-[ferredoxin] + 2 NH4(+) + 16 ADP + 16 phosphate + 6 H(+). In terms of biological role, the key enzymatic reactions in nitrogen fixation are catalyzed by the nitrogenase complex, which has 2 components: the iron protein (component 2) and a component 1 which is either a molybdenum-iron protein, a vanadium-iron, or an iron-iron protein. This Azotobacter chroococcum mcd 1 protein is Nitrogenase iron protein 2 (vnfH).